Consider the following 248-residue polypeptide: NADH dehydrogenase [ubiquinone] flavoprotein 2, mitochondrial (248 aa).

Residues 1–31 (MFSLALRARASGLTAQWGRHARNLHKTAVQN) constitute a mitochondrion transit peptide. [2Fe-2S] cluster is bound by residues Cys-134, Cys-139, Cys-175, and Cys-179. Phosphotyrosine; by SRC is present on Tyr-192. Positions 229-248 (GLTSLTEPPKGPGFGVQAGL) are disordered.

This sequence belongs to the complex I 24 kDa subunit family. Core subunit of respiratory chain NADH dehydrogenase (Complex I) which is composed of 45 different subunits. This is a component of the flavoprotein-sulfur (FP) fragment of the enzyme. It depends on [2Fe-2S] cluster as a cofactor.

The protein localises to the mitochondrion inner membrane. It carries out the reaction a ubiquinone + NADH + 5 H(+)(in) = a ubiquinol + NAD(+) + 4 H(+)(out). Functionally, core subunit of the mitochondrial membrane respiratory chain NADH dehydrogenase (Complex I) which catalyzes electron transfer from NADH through the respiratory chain, using ubiquinone as an electron acceptor. Parts of the peripheral arm of the enzyme, where the electrons from NADH are accepted by flavin mononucleotide (FMN) and then passed along a chain of iron-sulfur clusters by electron tunnelling to the final acceptor ubiquinone. Contains one iron-sulfur cluster. The protein is NADH dehydrogenase [ubiquinone] flavoprotein 2, mitochondrial of Rattus norvegicus (Rat).